A 151-amino-acid chain; its full sequence is Methylglyoxal synthase (151 aa).

The MGS-like domain maps to 6-151 (RTMPAHKHVA…DYEAYLAERM (146 aa)). Substrate-binding positions include histidine 19, lysine 23, 45 to 48 (TGTT), and 65 to 66 (SG). Residue aspartate 71 is the Proton donor/acceptor of the active site. A substrate-binding site is contributed by histidine 98.

It belongs to the methylglyoxal synthase family.

It carries out the reaction dihydroxyacetone phosphate = methylglyoxal + phosphate. Catalyzes the formation of methylglyoxal from dihydroxyacetone phosphate. This is Methylglyoxal synthase from Vibrio parahaemolyticus serotype O3:K6 (strain RIMD 2210633).